A 240-amino-acid chain; its full sequence is T-cell antigen CD7 (240 aa).

A signal peptide spans 1 to 25 (MAGPPRLLLLPLLLALARGLPGALA). Residues 26–130 (AQEVQQSPHC…NVYGSGTLVL (105 aa)) form the Ig-like domain. The Extracellular portion of the chain corresponds to 26–180 (AQEVQQSPHC…PDPPAASALP (155 aa)). Disulfide bonds link C35–C142 and C48–C114. 2 N-linked (GlcNAc...) asparagine glycosylation sites follow: N45 and N96. The interval 140-172 (HRCSDAPPRASALPAPPTGSALPDPQTASALPD) is disordered. 4 consecutive repeat copies span residues 145 to 153 (APPRASALP), 154 to 162 (APPTGSALP), 163 to 171 (DPQTASALP), and 172 to 180 (DPPAASALP). The tract at residues 145–180 (APPRASALPAPPTGSALPDPQTASALPDPPAASALP) is 4 X 9 AA tandem repeats, potential spacer function. The helical transmembrane segment at 181–201 (AALAVISFLLGLGLGVACVLA) threads the bilayer. C198 carries S-palmitoyl cysteine lipidation. At 202-240 (RTQIKKLCSWRDKNSAACVVYEDMSHSRCNTLSSPNQYQ) the chain is on the cytoplasmic side.

As to quaternary structure, interacts with SECTM1. In terms of tissue distribution, expressed on T-cells and natural killer (NK) cells and their precursors.

It is found in the membrane. Transmembrane glycoprotein expressed by T-cells and natural killer (NK) cells and their precursors. Plays a costimulatory role in T-cell activation upon binding to its ligand K12/SECTM1. In turn, mediates the production of cytokines such as IL-2. On resting NK-cells, CD7 activation results in a significant induction of interferon-gamma levels. The sequence is that of T-cell antigen CD7 (CD7) from Homo sapiens (Human).